Consider the following 503-residue polypeptide: Phenylalanine--tRNA ligase alpha subunit (503 aa).

An N-acetylserine modification is found at S2. Positions 2 to 173 are contains the major tRNA-Phe binding sites; that stretch reads SDFQLEILKK…KRKLIAQGKI (172 aa). L-phenylalanine contacts are provided by residues T333, 374 to 376, and Y414; that span reads QVE. Residue E416 coordinates Mg(2+). L-phenylalanine is bound at residue F440.

Belongs to the class-II aminoacyl-tRNA synthetase family. Phe-tRNA synthetase alpha subunit type 2 subfamily. In terms of assembly, tetramer of two alpha and two beta subunits. The cofactor is Mg(2+).

It localises to the cytoplasm. It carries out the reaction tRNA(Phe) + L-phenylalanine + ATP = L-phenylalanyl-tRNA(Phe) + AMP + diphosphate + H(+). In Saccharomyces cerevisiae (strain ATCC 204508 / S288c) (Baker's yeast), this protein is Phenylalanine--tRNA ligase alpha subunit (FRS2).